A 209-amino-acid polypeptide reads, in one-letter code: MFVTFEGVEGSGKSTQMTRLCAALEAAGRTVCRTRQPGGCFLGQTLRAILLSQKTAGLDDRAELFLYLADRAQHVAEVIRPALAAGQVVVCDRYTDSTVAYQGYGRGLDTTLLQNLNAVAAAGVVPDLTVLLDLDPAIGLTRATSRNAAAGTAEAEGRFEAERLEFHQRVRAGYRALAAAEPARFAVIDAAPSPDAVAEAVWGVVGKLL.

7 to 14 contributes to the ATP binding site; it reads GVEGSGKS.

Belongs to the thymidylate kinase family.

The enzyme catalyses dTMP + ATP = dTDP + ADP. Its function is as follows. Phosphorylation of dTMP to form dTDP in both de novo and salvage pathways of dTTP synthesis. The sequence is that of Thymidylate kinase from Solidesulfovibrio magneticus (strain ATCC 700980 / DSM 13731 / RS-1) (Desulfovibrio magneticus).